The sequence spans 208 residues: Uracil phosphoribosyltransferase (208 aa).

5-phospho-alpha-D-ribose 1-diphosphate is bound by residues arginine 78, arginine 103, and 130–138 (DPMLATGGT). Residues isoleucine 193 and 198–200 (GDA) each bind uracil. 5-phospho-alpha-D-ribose 1-diphosphate is bound at residue aspartate 199.

The protein belongs to the UPRTase family. It depends on Mg(2+) as a cofactor.

It carries out the reaction UMP + diphosphate = 5-phospho-alpha-D-ribose 1-diphosphate + uracil. Its pathway is pyrimidine metabolism; UMP biosynthesis via salvage pathway; UMP from uracil: step 1/1. Allosterically activated by GTP. Functionally, catalyzes the conversion of uracil and 5-phospho-alpha-D-ribose 1-diphosphate (PRPP) to UMP and diphosphate. The chain is Uracil phosphoribosyltransferase from Desulforapulum autotrophicum (strain ATCC 43914 / DSM 3382 / VKM B-1955 / HRM2) (Desulfobacterium autotrophicum).